A 681-amino-acid chain; its full sequence is Sodium-dependent phosphate transporter 1 (681 aa).

6 helical membrane-spanning segments follow: residues 25–45 (YLWM…SVGA), 66–86 (ACIL…AKVS), 106–126 (LMAG…VASF), 162–182 (IVMS…ILFF), 207–227 (ACTV…LLGF), and 234–254 (GTIL…WFFV). Ser269 and Ser273 each carry phosphoserine. Residues 269–296 (SPSESPLMEKKNSLKEDHEETKLSVSDI) are disordered. A compositionally biased stretch (basic and acidic residues) spans 275-290 (LMEKKNSLKEDHEETK). 4 helical membrane passes run 515 to 535 (VSLL…FAHG), 562 to 582 (VATP…GLWV), 604 to 624 (FSIE…GLPI), and 654 to 674 (IFMA…AIMA). The interval 554–562 (DTGDVSSKV) is a.

The protein belongs to the inorganic phosphate transporter (PiT) (TC 2.A.20) family.

The protein localises to the cell membrane. The enzyme catalyses 2 Na(+)(out) + phosphate(out) = 2 Na(+)(in) + phosphate(in). In terms of biological role, sodium-phosphate symporter which preferentially transports the monovalent form of phosphate with a stoichiometry of two sodium ions per phosphate ion. May play a role in extracellular matrix and cartilage calcification as well as in vascular calcification. Essential for cell proliferation but this function is independent of its phosphate transporter activity. The chain is Sodium-dependent phosphate transporter 1 (Slc20a1) from Felis catus (Cat).